A 475-amino-acid chain; its full sequence is MPKLTQLSLVTLALTAGSTLVSQTASAHGYVVSPESRSYACKTGSNVNCGAVQWEPQSVEGASGFPESGPADGKIASAANGAFSPLDEQSPSRWSKRDIKSGWNDFSWQFTANHVTRNWRYYLTRQGWDQNQPLSRASFDLAPFCVIDGGMVQPPKLVTHNCYVPEDRSGYQVILAVWEVGDTTNSFYNAIDVNFSSGAVVPGEWTDIGDINPSLDLKAGDKVMTRVFDANGEQSAKQTQITIADATQGAKQNWPFLLASAINAQQPQLKAGQKNAAGVISPVYGKNEIFAAPKSGLERVEVSFDIAPAPGNQLNVTSLADDYTIVDGAAQVSFDVSTNADMQVSAYLFSHDGTAAGYVTQAVNNTSASLVLDVVAPKAGHYHLQVKAEPKQGEVIQQNFDLFLKDQATAPDADFIFPEGIKSYVAGTKVLQPKTGKVYQCKPWPYNGYCVQWSPTATGFEPGIGNSWTMAWTEL.

Residues 1–27 (MPKLTQLSLVTLALTAGSTLVSQTASA) form the signal peptide. In terms of domain architecture, Chitin-binding type-4 spans 28 to 195 (HGYVVSPESR…SFYNAIDVNF (168 aa)). One can recognise a Chitin-binding type-3 domain in the interval 426-468 (AGTKVLQPKTGKVYQCKPWPYNGYCVQWSPTATGFEPGIGNSW).

The protein belongs to the GbpA family.

It localises to the secreted. Its function is as follows. Probably interacts with GlcNAc residues. May promote attachment to both epithelial cell surfaces and chitin. This chain is GlcNAc-binding protein A, found in Shewanella oneidensis (strain ATCC 700550 / JCM 31522 / CIP 106686 / LMG 19005 / NCIMB 14063 / MR-1).